Here is a 353-residue protein sequence, read N- to C-terminus: Methylthioribose-1-phosphate isomerase (353 aa).

Residues 51–53 (RGA), R94, and Q199 contribute to the substrate site. D240 acts as the Proton donor in catalysis. Residue 250-251 (NK) coordinates substrate.

Belongs to the eIF-2B alpha/beta/delta subunits family. MtnA subfamily. Homodimer.

It carries out the reaction 5-(methylsulfanyl)-alpha-D-ribose 1-phosphate = 5-(methylsulfanyl)-D-ribulose 1-phosphate. Its pathway is amino-acid biosynthesis; L-methionine biosynthesis via salvage pathway; L-methionine from S-methyl-5-thio-alpha-D-ribose 1-phosphate: step 1/6. Its function is as follows. Catalyzes the interconversion of methylthioribose-1-phosphate (MTR-1-P) into methylthioribulose-1-phosphate (MTRu-1-P). The chain is Methylthioribose-1-phosphate isomerase from Bacillus pumilus (strain SAFR-032).